The following is a 254-amino-acid chain: Isoprenyl transferase (254 aa).

Residue aspartate 12 is part of the active site. Aspartate 12 serves as a coordination point for Mg(2+). Substrate-binding positions include 13 to 16 (GNGR), tryptophan 17, arginine 25, histidine 29, and 57 to 59 (SSE). Asparagine 60 acts as the Proton acceptor in catalysis. Residues tryptophan 61, arginine 63, arginine 180, and 186-188 (RLS) each bind substrate. Mg(2+) is bound at residue glutamate 199.

The protein belongs to the UPP synthase family. As to quaternary structure, homodimer. It depends on Mg(2+) as a cofactor.

Its function is as follows. Catalyzes the condensation of isopentenyl diphosphate (IPP) with allylic pyrophosphates generating different type of terpenoids. This chain is Isoprenyl transferase, found in Brucella suis biovar 1 (strain 1330).